The following is a 438-amino-acid chain: chitinase-like effector (438 aa).

Residues 1–23 (MFTPLSSVTALLALSSAFLGAQA) form the signal peptide. Positions 54-437 (FIAKGYYTGW…DAIRSGAGLS (384 aa)) constitute a GH18 domain. Tryptophan 416 provides a ligand contact to chitin.

It belongs to the glycosyl hydrolase 18 family.

It localises to the secreted. Catalytically impaired chitinase that binds efficiently to chitin, but not to chitosan, xylan, or cellulose. Despite the lack of chitinolytic activity, retains substrate binding specificity and acts as an effector to prevent chitin-triggered immunity by sequestering immunogenic chitin fragments. Does not function in the protection of fungal cell wall against plant hydrolytic enzymes. This Moniliophthora perniciosa (Witches'-broom disease fungus) protein is chitinase-like effector.